A 311-amino-acid chain; its full sequence is tRNA-cytidine(32) 2-sulfurtransferase (311 aa).

A PP-loop motif motif is present at residues 47–52 (SGGKDS). 3 residues coordinate [4Fe-4S] cluster: Cys-122, Cys-125, and Cys-213.

This sequence belongs to the TtcA family. Homodimer. Mg(2+) is required as a cofactor. [4Fe-4S] cluster serves as cofactor.

It localises to the cytoplasm. The catalysed reaction is cytidine(32) in tRNA + S-sulfanyl-L-cysteinyl-[cysteine desulfurase] + AH2 + ATP = 2-thiocytidine(32) in tRNA + L-cysteinyl-[cysteine desulfurase] + A + AMP + diphosphate + H(+). It participates in tRNA modification. Functionally, catalyzes the ATP-dependent 2-thiolation of cytidine in position 32 of tRNA, to form 2-thiocytidine (s(2)C32). The sulfur atoms are provided by the cysteine/cysteine desulfurase (IscS) system. The chain is tRNA-cytidine(32) 2-sulfurtransferase from Shigella boydii serotype 18 (strain CDC 3083-94 / BS512).